The sequence spans 726 residues: Dipeptidyl-peptidase 5 (726 aa).

Residues 1 to 19 (MAAAKWLIASLAFASSGLA) form the signal peptide. 2 N-linked (GlcNAc...) asparagine glycosylation sites follow: asparagine 96 and asparagine 252. Residues 269–291 (AEPINKRNGPRTPQAIEGASSSP) form a disordered region. The active-site Charge relay system is the serine 558. N-linked (GlcNAc...) asparagine glycosylation occurs at asparagine 605. Residues aspartate 641 and histidine 673 each act as charge relay system in the active site. Asparagine 699 carries an N-linked (GlcNAc...) asparagine glycan.

The protein belongs to the peptidase S9C family.

The protein localises to the secreted. In terms of biological role, extracellular dipeptidyl-peptidase which removes N-terminal dipeptides sequentially from polypeptides having unsubstituted N-termini. Contributes to pathogenicity. This Trichophyton equinum (Horse ringworm fungus) protein is Dipeptidyl-peptidase 5 (DPP5).